The following is a 160-amino-acid chain: Cytochrome b6-f complex subunit 4 (160 aa).

3 helical membrane-spanning segments follow: residues 36–56, 95–115, and 131–151; these read LLYV…ALAV, LLGI…PFIE, and AVFL…TFPI.

Belongs to the cytochrome b family. PetD subfamily. The 4 large subunits of the cytochrome b6-f complex are cytochrome b6, subunit IV (17 kDa polypeptide, PetD), cytochrome f and the Rieske protein, while the 4 small subunits are PetG, PetL, PetM and PetN. The complex functions as a dimer.

Its subcellular location is the cellular thylakoid membrane. Its function is as follows. Component of the cytochrome b6-f complex, which mediates electron transfer between photosystem II (PSII) and photosystem I (PSI), cyclic electron flow around PSI, and state transitions. The sequence is that of Cytochrome b6-f complex subunit 4 from Rippkaea orientalis (strain PCC 8801 / RF-1) (Cyanothece sp. (strain PCC 8801)).